Here is a 151-residue protein sequence, read N- to C-terminus: Prefoldin subunit alpha (151 aa).

This sequence belongs to the prefoldin subunit alpha family. As to quaternary structure, heterohexamer of two alpha and four beta subunits.

The protein resides in the cytoplasm. Its function is as follows. Molecular chaperone capable of stabilizing a range of proteins. Seems to fulfill an ATP-independent, HSP70-like function in archaeal de novo protein folding. The chain is Prefoldin subunit alpha from Sulfurisphaera tokodaii (strain DSM 16993 / JCM 10545 / NBRC 100140 / 7) (Sulfolobus tokodaii).